Here is a 213-residue protein sequence, read N- to C-terminus: Glycerol-3-phosphate acyltransferase (213 aa).

Transmembrane regions (helical) follow at residues 3-23, 48-68, 71-91, 119-139, 144-164, and 165-185; these read IIILLLIASYLLGAIPFGLWI, ILGVKAGIAVFIFDLLKGTLA, LPLIFHINGVSPLIFGLLAVI, PFFLLYLLVIFILVLWLFSMI, VVAAIFALLGILIFPSFGFIL, and TSYDLLFSIIIFALAIIIIFR.

This sequence belongs to the PlsY family. As to quaternary structure, probably interacts with PlsX.

The protein localises to the cell membrane. It catalyses the reaction an acyl phosphate + sn-glycerol 3-phosphate = a 1-acyl-sn-glycero-3-phosphate + phosphate. Its pathway is lipid metabolism; phospholipid metabolism. Functionally, catalyzes the transfer of an acyl group from acyl-phosphate (acyl-PO(4)) to glycerol-3-phosphate (G3P) to form lysophosphatidic acid (LPA). This enzyme utilizes acyl-phosphate as fatty acyl donor, but not acyl-CoA or acyl-ACP. This chain is Glycerol-3-phosphate acyltransferase, found in Lactococcus lactis subsp. cremoris (strain MG1363).